Here is a 575-residue protein sequence, read N- to C-terminus: DNA polymerase lambda (575 aa).

The BRCT domain occupies 36–132; the sequence is EAEEWLSSLR…RLVDVAGFSI (97 aa). Residues 160–205 form a disordered region; sequence ALLQTALPPPPSPTRPVSPPQKTKEAPNTQAQPISDDEASDGEETQ. Residues 166 to 178 show a composition bias toward pro residues; that stretch reads LPPPPSPTRPVSP. The span at 194–203 shows a compositional bias: acidic residues; it reads SDDEASDGEE. The segment at 265-279 is DNA-binding; it reads KAYSVQGDKWRALGY. Catalysis depends on K312, which acts as the Schiff-base intermediate with DNA. The DNA-binding stretch occupies residues 345 to 348; the sequence is GTKT. DCTP is bound by residues R386, 417 to 420, and 426 to 429; these read SYRR and GDVD. The tract at residues 420–429 is involved in primer binding; the sequence is RGKATCGDVD. Residues D427, D429, and D490 each coordinate Mn(2+). The DNA-binding stretch occupies residues 466–505; it reads ENGQQQKYLGVCRLPGPGWRHRRLDIIVVPYSEFACALLY. N513 contacts dCTP.

Belongs to the DNA polymerase type-X family. As to quaternary structure, interacts with PCNA. Interacts with PAXX; promoting POLL recruitment to double-strand breaks (DSBs) and stimulation of the end-filling activity of POLL. Interacts with XRCC4; promoting POLL recruitment to double-strand breaks (DSBs) and stimulation of the end-filling activity of POLL. Interacts with NHEJ1/XLF; promoting POLL recruitment to double-strand breaks (DSBs) and stimulation of the end-filling activity of POLL. Mn(2+) serves as cofactor.

It localises to the nucleus. The catalysed reaction is DNA(n) + a 2'-deoxyribonucleoside 5'-triphosphate = DNA(n+1) + diphosphate. DNA polymerase that functions in several pathways of DNA repair. Involved in base excision repair (BER) responsible for repair of lesions that give rise to abasic (AP) sites in DNA. Also contributes to DNA double-strand break repair by non-homologous end joining and homologous recombination. Has both template-dependent and template-independent (terminal transferase) DNA polymerase activities. Also has a 5'-deoxyribose-5-phosphate lyase (dRP lyase) activity. The protein is DNA polymerase lambda of Macaca fascicularis (Crab-eating macaque).